A 340-amino-acid chain; its full sequence is MNICVNSLYRLSTPQFHSLYSEDVSDEALALLIGEVENGNQNCIDLLCNLALRNDDLGHKVEKLLFDLFSGKRSGSPDIDKKINQACLVLHQIANNDITKDNTEWKKLHAPSRLLYMAGSATTDLSKKIGIAHKIMGDQFAQTDQEQVGVENLWCGARMLSSDELAAATQGLVQESPLLSVNYPIGLIHPTTKENILSTQLLEKIAQSGLSHNEVFLVNTGDHWLLCLFYKLAEKIKCLIFNTYYDLNENTKQEIIEAAKIAGISESDEVNFIEMNLQNNVPNGCGLFCYHTIQLLSNAGQNDPVTTLREFAEKFLTLSVEEQALFNTQTRRQIYEYSLQ.

Residue His223 is part of the active site. Cys285 acts as the Nucleophile in catalysis.

The protein belongs to the peptidase C79 family.

The protein resides in the secreted. The protein localises to the host cytoplasm. Its function is as follows. Effector proteins function to alter host cell physiology and promote bacterial survival in host tissues. This protease targets the host cell ubiquitin pathway by acting as a deubiquitinase in infected host cells. This chain is Deubiquitinase SseL (sseL), found in Salmonella paratyphi B (strain ATCC BAA-1250 / SPB7).